We begin with the raw amino-acid sequence, 180 residues long: UPF0227 protein VV2369 (180 aa).

The protein belongs to the UPF0227 family.

The polypeptide is UPF0227 protein VV2369 (Vibrio vulnificus (strain YJ016)).